Consider the following 221-residue polypeptide: GTP cyclohydrolase III (221 aa).

It belongs to the archaeal-type GTP cyclohydrolase family.

The catalysed reaction is GTP + 3 H2O = 2-amino-5-formylamino-6-(5-phospho-D-ribosylamino)pyrimidin-4(3H)-one + 2 phosphate + 2 H(+). Catalyzes the formation of 2-amino-5-formylamino-6-ribofuranosylamino-4(3H)-pyrimidinone ribonucleotide monophosphate and inorganic phosphate from GTP. Also has an independent pyrophosphate phosphohydrolase activity. The polypeptide is GTP cyclohydrolase III (Pyrobaculum aerophilum (strain ATCC 51768 / DSM 7523 / JCM 9630 / CIP 104966 / NBRC 100827 / IM2)).